Here is a 343-residue protein sequence, read N- to C-terminus: F17g-G fimbrial adhesin (343 aa).

The N-terminal stretch at 1-22 (MTNFYKVCLAVFILVCCNISHA) is a signal peptide. Residues 23–199 (AVSFIGSTEN…LNPFTLNDTV (177 aa)) are receptor-binding lectin domain. Residues 65–66 (AN), 110–111 (DT), and 138–141 (STQG) contribute to the a carbohydrate site. Residues Cys-75 and Cys-132 are joined by a disulfide bond. A fimbrillin-binding domain region spans residues 200 to 343 (TSCRLLTPSA…GISTFTFSYQ (144 aa)). The disordered stretch occupies residues 287–307 (LKFGPDSPVKGNENQWQLSTG). The segment covering 298-307 (NENQWQLSTG) has biased composition (polar residues).

The protein belongs to the fimbrial protein family.

The protein localises to the fimbrium. Its function is as follows. Essential fimbrial adhesion factor that mediates binding to N-acetylglucosamine-containing receptors in the host intestinal microvilli, leading to colonization of the intestinal tissue, and diarrhea or septicemia. Also confers adhesiveness to laminin and basement membranes. May be involved in the initiation of polymerization of fimbrillin monomers during fimbrial filament biogenesis. The protein is F17g-G fimbrial adhesin (f17gG) of Escherichia coli.